Here is a 207-residue protein sequence, read N- to C-terminus: ATP synthase subunit b 2 (207 aa).

The chain crosses the membrane as a helical span at residues 53–72 (TYASQLLWLVITFGVFYLLM).

This sequence belongs to the ATPase B chain family. As to quaternary structure, F-type ATPases have 2 components, F(1) - the catalytic core - and F(0) - the membrane proton channel. F(1) has five subunits: alpha(3), beta(3), gamma(1), delta(1), epsilon(1). F(0) has three main subunits: a(1), b(2) and c(10-14). The alpha and beta chains form an alternating ring which encloses part of the gamma chain. F(1) is attached to F(0) by a central stalk formed by the gamma and epsilon chains, while a peripheral stalk is formed by the delta and b chains.

The protein localises to the cell inner membrane. F(1)F(0) ATP synthase produces ATP from ADP in the presence of a proton or sodium gradient. F-type ATPases consist of two structural domains, F(1) containing the extramembraneous catalytic core and F(0) containing the membrane proton channel, linked together by a central stalk and a peripheral stalk. During catalysis, ATP synthesis in the catalytic domain of F(1) is coupled via a rotary mechanism of the central stalk subunits to proton translocation. In terms of biological role, component of the F(0) channel, it forms part of the peripheral stalk, linking F(1) to F(0). The b'-subunit is a diverged and duplicated form of b found in plants and photosynthetic bacteria. The protein is ATP synthase subunit b 2 (atpF2) of Rhizobium etli (strain ATCC 51251 / DSM 11541 / JCM 21823 / NBRC 15573 / CFN 42).